Reading from the N-terminus, the 1346-residue chain is Adhesion G protein-coupled receptor F5 (1346 aa).

A signal peptide spans 1–21 (MKSPRRTTLCLMFIVIYSSKA). The Extracellular segment spans residues 22-1006 (ALNWNYESTI…MSPDSPDPSS (985 aa)). N-linked (GlcNAc...) asparagine glycosylation is found at asparagine 73, asparagine 94, asparagine 106, asparagine 188, asparagine 256, asparagine 272, asparagine 301, asparagine 315, asparagine 328, asparagine 398, asparagine 472, asparagine 487, asparagine 505, asparagine 540, asparagine 627, asparagine 649, asparagine 666, asparagine 820, asparagine 931, asparagine 963, and asparagine 982. In terms of domain architecture, SEA spans 166-273 (LQEDVTLNMR…NSFQAVTINE (108 aa)). 3 Ig-like domains span residues 267 to 368 (QAVT…IDVM), 369 to 466 (PIQI…IKVT), and 471 to 561 (ANLT…KDVI). Intrachain disulfides connect cysteine 293-cysteine 350 and cysteine 391-cysteine 449. Cysteine 492 and cysteine 545 are joined by a disulfide. In terms of domain architecture, GAIN-B spans 842–1003 (PPLSFSQTNV…SILMSPDSPD (162 aa)). 2 cysteine pairs are disulfide-bonded: cysteine 954/cysteine 985 and cysteine 973/cysteine 987. Residues 954-1003 (CVFWNFRLANNTGGWDSSGCYVEEGDGDNVTCICDHLTSFSILMSPDSPD) form a GPS region. The tethered agonist stretch occupies residues 991-1006 (TSFSILMSPDSPDPSS). The helical transmembrane segment at 1007–1027 (LLGILLDIISYVGVGFSILSL) threads the bilayer. Over 1028 to 1053 (AACLVVEAVVWKSVTKNRTSYMRHTC) the chain is Cytoplasmic. A helical transmembrane segment spans residues 1054–1074 (IVNIAASLLVANTWFIVVAAI). The Extracellular segment spans residues 1075–1090 (QDNRYILCKTACVAAT). The chain crosses the membrane as a helical span at residues 1091 to 1111 (FFIHFFYLSVFFWMLTLGLML). Residues 1112-1128 (FYRLVFILHETSRSTQK) are Cytoplasmic-facing. The chain crosses the membrane as a helical span at residues 1129–1149 (AIAFCLGYGCPLAISVITLGA). At 1150–1173 (TQPREVYTRKNVCWLNWEDTKALL) the chain is on the extracellular side. Residues 1174 to 1194 (AFAIPALIIVVVNITITIVVI) form a helical membrane-spanning segment. At 1195 to 1220 (TKILRPSIGDKPCKQEKSSLFQISKS) the chain is on the cytoplasmic side. A helical transmembrane segment spans residues 1221–1241 (IGVLTPLLGLTWGFGLTTVFP). Over 1242–1244 (GTN) the chain is Extracellular. A helical transmembrane segment spans residues 1245–1265 (LVFHIIFAILNVFQGLFILLF). Over 1266–1346 (GCLWDLKVQE…NSSSASSLLN (81 aa)) the chain is Cytoplasmic. Threonine 1300 is modified (phosphothreonine). Serine 1307 is modified (phosphoserine). Residues 1327–1346 (TPEATSSSLENSSSASSLLN) form a disordered region. Low complexity predominate over residues 1329 to 1346 (EATSSSLENSSSASSLLN).

It belongs to the G-protein coupled receptor 2 family. Adhesion G-protein coupled receptor (ADGR) subfamily. Homodimer; disulfide-linked. Heterodimer of 2 chains generated by proteolytic processing; the large extracellular N-terminal fragment and the membrane-bound C-terminal fragment predominantly remain associated and non-covalently linked. Fragment generates by the processing enzyme furin remains attached to the extracellular N-terminal fragment. Interacts (via N-terminal extracellular domain) with SFTPD. Post-translationally, highly glycosylated. Proteolytically cleaved at multiple sites: one in the GPS region of the GAIN-B domain (S1 site) and the other in the SEA domain (S2 site). The proteolytic cleavage at S1 site generates an extracellular subunit and a seven-transmembrane subunit. The proteolytic cleavage at S2 site generates a fragment that undergoes proteolytic cleavage by the processing enzyme furin. As to expression, expressed in lung endothelial cells and in alveolar type II (ATII) cells (at protein level). Expressed high levels in subcutaneous adipose tissue in lean individuals and at lower levels in visceral fat. Expression levels in subcutaneous adipose tissue drastically drop in obese individuals.

It localises to the cell membrane. As an adhesion G protein-coupled receptor (aGPCR) exhibits a large N-terminal extracellular domain containing highly conserved GPCR autoproteolysis-inducing (GAIN) domain. During synthesis, intracellular autoproteolytic processing of nascent chain within the GAIN domain generates a mature protein, consisting of an N-terminal fragment that is non-covalently linked to the C-terminal fragment. The mature protein is routed to the plasma membrane where the N- and C-terminal fragments remain associated, forming the holoreceptor. Dissociation of the aGPCR fragments stimulates G protein signaling through the action of the tethered-peptide agonist stalk that is occluded within the GAIN domain in the holoreceptor form. This dissociation might be induced by ligand binding, such as that of sFNDC4. In terms of biological role, adhesion G protein-coupled receptor. In alveolar type II (ATII or AT2) cells, required for normal lung surfactant homeostasis. Modulation of both surfactant secretion and uptake by ATII cells is mediated by the downstream activation of GNAQ/GNA11 proteins and may be a consequence of increased cortical F-actin assembly induced by ADGRF5 activation. In the kidney, may play a role in the regulation of acid excretion into the primary urine, possibly by regulating the surface expression of V-ATPase proton pump. As a receptor for soluble FNDC4 (sFNDC4), required for proper systemic glucose tolerance, specifically sensitizing white adipose tissue to insulin. Also plays a role in sFNDC4-induced decrease of local inflammation in white adipose tissue. In Homo sapiens (Human), this protein is Adhesion G protein-coupled receptor F5.